Here is a 101-residue protein sequence, read N- to C-terminus: Ascorbate-specific PTS system EIIB component (101 aa).

One can recognise a PTS EIIB type-2 domain in the interval 3 to 96; the sequence is VRILAVCGNG…KLLEVIKAHF (94 aa). The active-site Phosphocysteine intermediate is Cys-9. Cys-9 is subject to Phosphocysteine.

The protein localises to the cytoplasm. It carries out the reaction N(pros)-phospho-L-histidyl-[protein] + L-ascorbate(out) = L-ascorbate 6-phosphate(in) + L-histidyl-[protein]. In terms of biological role, the phosphoenolpyruvate-dependent sugar phosphotransferase system (sugar PTS), a major carbohydrate active transport system, catalyzes the phosphorylation of incoming sugar substrates concomitantly with their translocation across the cell membrane. The enzyme II UlaABC PTS system is involved in ascorbate transport. This chain is Ascorbate-specific PTS system EIIB component (ulaB), found in Shigella sonnei (strain Ss046).